The following is a 195-amino-acid chain: CASP-like protein IN26 (195 aa).

The Cytoplasmic segment spans residues 1-26 (VAPTGSVETEKAGPSYKPKEYYKVTE). A helical transmembrane segment spans residues 27-47 (AILRLLLLASLVVAVVVMVTS). At 48-75 (KETELISVKLDPFPPFMLPLTAKFTQSP) the chain is on the extracellular side. The chain crosses the membrane as a helical span at residues 76 to 96 (AFIYFVAGLSVAGLYTIISTL). Over 97-120 (ASFYNLLIKPGFCPALVSHFIILD) the chain is Cytoplasmic. Residues 121-143 (VVMLGIVGTATGAAGGVAYIGLK) form a helical membrane-spanning segment. The Extracellular portion of the chain corresponds to 144-163 (GNSHVGWTKVCNKYGKLCTH). The chain crosses the membrane as a helical span at residues 164–184 (LGASLAVSFFAFIVLLLLIIL). At 185–195 (SIHSLSKKIPK) the chain is on the cytoplasmic side.

This sequence belongs to the Casparian strip membrane proteins (CASP) family. In terms of assembly, homodimer and heterodimers.

The protein localises to the cell membrane. The sequence is that of CASP-like protein IN26 (IN26) from Ipomoea nil (Japanese morning glory).